A 945-amino-acid polypeptide reads, in one-letter code: Isoleucine--tRNA ligase (945 aa).

A 'HIGH' region motif is present at residues 67 to 77 (PYANGQIHLGH). L-isoleucyl-5'-AMP is bound at residue Glu573. The short motif at 614–618 (KMSKS) is the 'KMSKS' region element. Lys617 lines the ATP pocket. Zn(2+) is bound by residues Cys908, Cys911, Cys928, and Cys931.

The protein belongs to the class-I aminoacyl-tRNA synthetase family. IleS type 1 subfamily. In terms of assembly, monomer. Zn(2+) is required as a cofactor.

It is found in the cytoplasm. It catalyses the reaction tRNA(Ile) + L-isoleucine + ATP = L-isoleucyl-tRNA(Ile) + AMP + diphosphate. In terms of biological role, catalyzes the attachment of isoleucine to tRNA(Ile). As IleRS can inadvertently accommodate and process structurally similar amino acids such as valine, to avoid such errors it has two additional distinct tRNA(Ile)-dependent editing activities. One activity is designated as 'pretransfer' editing and involves the hydrolysis of activated Val-AMP. The other activity is designated 'posttransfer' editing and involves deacylation of mischarged Val-tRNA(Ile). The sequence is that of Isoleucine--tRNA ligase from Acinetobacter baylyi (strain ATCC 33305 / BD413 / ADP1).